Reading from the N-terminus, the 705-residue chain is Double-strand break repair protein MRE11 (705 aa).

Positions 15, 17, 55, and 122 each coordinate Mn(2+). Histidine 123 acts as the Proton donor in catalysis. Residues histidine 220, histidine 248, and histidine 250 each coordinate Mn(2+). The segment covering 505–514 (RSLRSKEDSR) has biased composition (basic and acidic residues). The segment at 505–705 (RSLRSKEDSR…TRNYGAVRRR (201 aa)) is disordered. Polar residues-rich tracts occupy residues 515-538 (FTSSSQNLDTGGRSVTAQSNLNSF) and 589-605 (SMKQTTLNFSQSRSSAA). A compositionally biased stretch (basic residues) spans 641–663 (GRKRAAPRGGRGRGRGATAKRGR).

It belongs to the MRE11/RAD32 family. In terms of assembly, component of the MRN complex composed of two heterodimers RAD50/MRE11 associated with a single NBS1. Mn(2+) serves as cofactor.

Its subcellular location is the nucleus. It localises to the chromosome. Functionally, core component of the MRN complex, which plays a central role in double-strand break (DSB) repair, DNA recombination, maintenance of telomere integrity and meiosis. The MRN complex is involved in the repair of DNA double-strand breaks (DSBs) via homologous recombination (HR), an error-free mechanism which primarily occurs during S and G2 phases. The complex (1) mediates the end resection of damaged DNA, which generates proper single-stranded DNA, a key initial steps in HR, and is (2) required for the recruitment of other repair factors and efficient activation of ATM and ATR upon DNA damage. Within the MRN complex, MRE11 possesses both single-strand endonuclease activity and double-strand-specific 3'-5' exonuclease activity. MRE11 first endonucleolytically cleaves the 5' strand at DNA DSB ends to prevent non-homologous end joining (NHEJ) and licence HR. It then generates a single-stranded DNA gap via 3' to 5' exonucleolytic degradation, which is required for single-strand invasion and recombination. This is Double-strand break repair protein MRE11 from Oryza sativa subsp. indica (Rice).